The following is a 712-amino-acid chain: MTPIVKQFKYGQHTVTLETGAIARQATAAVMASMDDTTVFVSVVAKKEVKEGQDFFPLTVNYQERTYAAGRIPGGFFKREGRPSENETLIARLIDRPIRPLFPEGFFNEIQIVATVVSVNPQISPDLVAMIGASAALSLSGVPFNGPIGAARVGFINDQFVLNPTITEQKQSRLDLVVAGTDKAVLMVESEADILSEEQMLAAVVFGHQQQQIVIENIKEFVKEAGKPRWDWQPAEANTALINQVKALAETRIGDAYRITEKQARYEQIDAIKADVIAQLTAQDETISEGAIIDIITALESSVVRGRILAGEPRIDGRTVDTVRALNICTGVLPRTHGSAIFTRGETQALAVATLGTERDAQIIDELTGEKSDRFLFHYNFPPYSVGETGMIGSPKRREIGHGRLAKRGVLAVMPSAEEFPYVVRVVSEITESNGSSSMASVCGASLALMDAGVPIKATVAGIAMGLVKEDEKFVVLSDILGDEDHLGDMDFKVAGTRKGITALQMDIKIEGITPEIMHIALNQAKGARMHILNVMEQALPAPRADLSDFAPRIHTMKIDPKKIKDVIGKGGAVIRSLTEETGTSIDIDDDGTVKIAATDNNAAKMVMSRIEEIVAEVEVNAIYTGKVSRVVDFGAFVTILGGKEGLVHISQITDARVERVSDYLSVGQEVNVKVVEIDRQNRIRLTMKDLDNNLSTNVTPEAVVQEESTEN.

Residues D485 and D491 each contribute to the Mg(2+) site. One can recognise a KH domain in the interval 552-611 (PRIHTMKIDPKKIKDVIGKGGAVIRSLTEETGTSIDIDDDGTVKIAATDNNAAKMVMSRI). Residues 621–689 (NAIYTGKVSR…RQNRIRLTMK (69 aa)) form the S1 motif domain.

This sequence belongs to the polyribonucleotide nucleotidyltransferase family. In terms of assembly, component of the RNA degradosome, which is a multiprotein complex involved in RNA processing and mRNA degradation. Mg(2+) is required as a cofactor.

It localises to the cytoplasm. The catalysed reaction is RNA(n+1) + phosphate = RNA(n) + a ribonucleoside 5'-diphosphate. Functionally, involved in mRNA degradation. Catalyzes the phosphorolysis of single-stranded polyribonucleotides processively in the 3'- to 5'-direction. The polypeptide is Polyribonucleotide nucleotidyltransferase (Haemophilus ducreyi (strain 35000HP / ATCC 700724)).